The chain runs to 206 residues: Sclerostin domain-containing protein 1 (206 aa).

The first 23 residues, 1 to 23 (MLPPAIHFYLLPLACILMKSCLA), serve as a signal peptide directing secretion. A glycan (N-linked (GlcNAc...) asparagine) is linked at Asn-47. 4 disulfides stabilise this stretch: Cys-75/Cys-133, Cys-89/Cys-147, Cys-100/Cys-163, and Cys-104/Cys-165. In terms of domain architecture, CTCK spans 75 to 170 (CRELRSTKYI…TACKCKRYTR (96 aa)). The N-linked (GlcNAc...) asparagine glycan is linked to Asn-173. Residues 174–206 (ESSHNFESMSPAKPVQHHRERKRASKSSKHSMS) are disordered. Basic residues predominate over residues 188-206 (VQHHRERKRASKSSKHSMS).

The protein belongs to the sclerostin family. In terms of assembly, interacts with BMP2, BMP4, BMP6 and BMP7 with high affinity. In terms of tissue distribution, highly expressed in kidney and weakly in lung.

It localises to the secreted. In terms of biological role, may be involved in the onset of endometrial receptivity for implantation/sensitization for the decidual cell reaction Enhances Wnt signaling and inhibits TGF-beta signaling. Directly antagonizes activity of BMP2, BMP4, BMP6 and BMP7 in a dose-dependent manner. The sequence is that of Sclerostin domain-containing protein 1 (SOSTDC1) from Homo sapiens (Human).